Here is a 190-residue protein sequence, read N- to C-terminus: Small ribosomal subunit protein uS4 (190 aa).

The S4 RNA-binding domain maps to 106–178 (RRLQTVVFKH…GRVKRVKRNA (73 aa)). The interval 166 to 190 (GRPGRVKRVKRNAAKKGSGGGDDDE) is disordered. The span at 169-179 (GRVKRVKRNAA) shows a compositional bias: basic residues.

It belongs to the universal ribosomal protein uS4 family.

This chain is Small ribosomal subunit protein uS4, found in Trypanosoma brucei brucei.